Here is a 52-residue protein sequence, read N- to C-terminus: MYKLCILFLVVIFAVMAIAKECIPSNQQCSTISPPCCSGNCVLQGKHFSICA.

An N-terminal signal peptide occupies residues 1–19 (MYKLCILFLVVIFAVMAIA). 3 cysteine pairs are disulfide-bonded: Cys22–Cys37, Cys29–Cys41, and Cys36–Cys51.

Abundantly expressed by teratocytes, which are extra-embryonic cells released by parasitoid wasps into their hosts during larval eclosion.

It localises to the secreted. Its function is as follows. This endoparasitoid wasp peptide has immununosuppressive, antimicrobial and insecticidal activities. Suppress cellular immunity which is detectable as a reduction of hemocyte encapsulation in the host. Shows potent antifungal activity against C.albicans (MIC~0.25 ug/ml). In vivo, ingestion of this peptide (probably at excessive doses) increases larval mortality and reduces leaf consumption of D.saccharalis, a permissive host for C.flavipes. The chain is Teratocyte protein CftICK-I from Cotesia flavipes (Parasitic wasp).